Consider the following 807-residue polypeptide: 1,4-alpha-glucan branching enzyme GlgB (807 aa).

Asp405 serves as the catalytic Nucleophile. The active-site Proton donor is the Glu458.

This sequence belongs to the glycosyl hydrolase 13 family. GlgB subfamily. As to quaternary structure, monomer.

It carries out the reaction Transfers a segment of a (1-&gt;4)-alpha-D-glucan chain to a primary hydroxy group in a similar glucan chain.. Its pathway is glycan biosynthesis; glycogen biosynthesis. Functionally, catalyzes the formation of the alpha-1,6-glucosidic linkages in glycogen by scission of a 1,4-alpha-linked oligosaccharide from growing alpha-1,4-glucan chains and the subsequent attachment of the oligosaccharide to the alpha-1,6 position. This Histophilus somni (strain 129Pt) (Haemophilus somnus) protein is 1,4-alpha-glucan branching enzyme GlgB.